The chain runs to 213 residues: Pyridoxine/pyridoxamine 5'-phosphate oxidase (213 aa).

Substrate is bound by residues 9 to 12 and Lys67; that span reads RKDY. FMN contacts are provided by residues 62-67, 77-78, Arg83, Lys84, and Gln106; these read RIVLLK and FT. The substrate site is built by Tyr124, Arg128, and Ser132. Residues 141-142 and Trp186 contribute to the FMN site; that span reads QS. 192 to 194 is a substrate binding site; the sequence is RLH. Arg196 lines the FMN pocket.

This sequence belongs to the pyridoxamine 5'-phosphate oxidase family. Homodimer. FMN is required as a cofactor.

The enzyme catalyses pyridoxamine 5'-phosphate + O2 + H2O = pyridoxal 5'-phosphate + H2O2 + NH4(+). The catalysed reaction is pyridoxine 5'-phosphate + O2 = pyridoxal 5'-phosphate + H2O2. It participates in cofactor metabolism; pyridoxal 5'-phosphate salvage; pyridoxal 5'-phosphate from pyridoxamine 5'-phosphate: step 1/1. It functions in the pathway cofactor metabolism; pyridoxal 5'-phosphate salvage; pyridoxal 5'-phosphate from pyridoxine 5'-phosphate: step 1/1. Catalyzes the oxidation of either pyridoxine 5'-phosphate (PNP) or pyridoxamine 5'-phosphate (PMP) into pyridoxal 5'-phosphate (PLP). This Cyanothece sp. (strain PCC 7425 / ATCC 29141) protein is Pyridoxine/pyridoxamine 5'-phosphate oxidase.